The sequence spans 378 residues: Probable pectin lyase C (378 aa).

The first 18 residues, 1–18, serve as a signal peptide directing secretion; sequence MKVPFLQLLCLNAALASA. 2 cysteine pairs are disulfide-bonded: Cys-81–Cys-100 and Cys-90–Cys-220. Asn-123 is a glycosylation site (N-linked (GlcNAc...) asparagine). The active site involves Arg-250. Cys-316 and Cys-324 form a disulfide bridge.

The protein belongs to the polysaccharide lyase 1 family.

The protein resides in the secreted. The catalysed reaction is Eliminative cleavage of (1-&gt;4)-alpha-D-galacturonan methyl ester to give oligosaccharides with 4-deoxy-6-O-methyl-alpha-D-galact-4-enuronosyl groups at their non-reducing ends.. Pectinolytic enzymes consist of four classes of enzymes: pectin lyase, polygalacturonase, pectin methylesterase and rhamnogalacturonase. Among pectinolytic enzymes, pectin lyase is the most important in depolymerization of pectin, since it cleaves internal glycosidic bonds of highly methylated pectins. The polypeptide is Probable pectin lyase C (pelC) (Aspergillus niger).